A 411-amino-acid polypeptide reads, in one-letter code: Tetra-peptide repeat homeobox protein 1 (411 aa).

A DNA-binding region (homeobox) is located at residues 3 to 24 (SLREQQLQVWFKNRRAKLARER). Disordered regions lie at residues 20 to 63 (LARE…SGIL), 88 to 246 (IPAA…ISGP), 286 to 340 (PILS…SPDA), and 363 to 411 (LEGS…LLDL). Over residues 27–55 (QQQPQRVPGQRGRGARAAPLVPAASASAP) the composition is skewed to low complexity. Composition is skewed to pro residues over residues 95–139 (GPGP…PGPI) and 149–246 (FRGP…ISGP). Low complexity predominate over residues 295 to 307 (SPGSLPGLAPILG). The segment covering 319-335 (APIPGPGSLPAPAPLWP) has biased composition (pro residues). 2 stretches are compositionally biased toward polar residues: residues 366 to 376 (SSVSTMTSQYQ) and 388 to 402 (GSQP…NENH).

The protein belongs to the paired homeobox family.

Its subcellular location is the nucleus. Transcription factor expressed after fertilization required for zygotic genome activation (ZGA), a critical event in early embryonic development during which the developmental control passes from maternally provided mRNAs to the expression of the zygotic genome after fertilization. Binds and activates expression of key ZGA marker genes, such as NANOGNB, ZSCAN4, DUXB, KLF5 and DPPA3. Binds to regulatory DNA sequences containing a 5'-TAATCC-3' sequence motif. The sequence is that of Tetra-peptide repeat homeobox protein 1 from Homo sapiens (Human).